The following is a 423-amino-acid chain: TPR repeat-containing protein YpiA (423 aa).

9 TPR repeats span residues 33-66, 67-100, 135-168, 171-204, 238-271, 272-305, 306-339, 340-373, and 374-407; these read DEDKAIAAQLYYEWGDVEKAISLISDLHDLYPNE, TELTNFYAELLIDIDEEEKALAVLETIPETDPSY, PVIDFALGELYFAQGAYAKAVQYFKTTAEEQSEI, VNVHQRLAESLSASGEFEDAIPWYEKAVDENPDP, TSLYMPLSKSYEAEGMYEEALKTAKEGIRYDEYN, KELFLYAAKMALKIGKSEEGKKLLQEALALDPGF, VEALHTLLAVYHKEEDYDQIIDLIQEVRSYGEED, PKYNWYLASAYTELEQYEEAKQSFEAAYLHYRED, and RDFLYEYASFLLEEGLQKEALPLLKKVLEMDGAN.

In terms of assembly, interacts with the RNA polymerase core.

In Bacillus subtilis (strain 168), this protein is TPR repeat-containing protein YpiA (ypiA).